The chain runs to 425 residues: Histidine--tRNA ligase (425 aa).

Belongs to the class-II aminoacyl-tRNA synthetase family. In terms of assembly, homodimer.

The protein resides in the cytoplasm. It carries out the reaction tRNA(His) + L-histidine + ATP = L-histidyl-tRNA(His) + AMP + diphosphate + H(+). This Shewanella oneidensis (strain ATCC 700550 / JCM 31522 / CIP 106686 / LMG 19005 / NCIMB 14063 / MR-1) protein is Histidine--tRNA ligase.